Here is a 370-residue protein sequence, read N- to C-terminus: Seipin (370 aa).

A signal peptide spans 1–18 (MNILLRLIVFALDPLGLG). Residues 19–55 (RRFLIRPAVNLGWNVYDRVRSKADEKVGTVRELVLRL) are Cytoplasmic-facing. Residues 56-76 (GLIAFAVVLIIWLAVFMYAAF) form a helical membrane-spanning segment. The Lumenal portion of the chain corresponds to 77 to 251 (YYVYMPAISH…GLRYIMFNWP (175 aa)). A helical membrane pass occupies residues 252 to 272 (VLSAIVAISTNLFFILVVFLL). At 273-370 (SWYHWSDAKW…RPTKKTTADH (98 aa)) the chain is on the cytoplasmic side. The interval 346 to 370 (KSRSGKRESPDALRKRPTKKTTADH) is disordered. The span at 350–359 (GKRESPDALR) shows a compositional bias: basic and acidic residues.

As to expression, widely expressed, with highest levels detected in fat body, moderate levels detected in salivary gland, midgut and muscle, and weak expression detected in brain.

It is found in the endoplasmic reticulum membrane. Its subcellular location is the lipid droplet. In terms of biological role, acts as a tissue-autonomous lipid modulator, preventing ectopic lipid accumulation in salivary gland (a non-adipose tissue) and in promoting lipid storage in fat tissue. Required for the growth and maturation of small nascent lipid droplets (LDs) into larger mature LDs. In Drosophila melanogaster (Fruit fly), this protein is Seipin.